Here is a 412-residue protein sequence, read N- to C-terminus: Protein MITOFERRINLIKE 1, chloroplastic (412 aa).

The transit peptide at methionine 1–lysine 92 directs the protein to the chloroplast. The tract at residues valine 43–proline 83 is disordered. Solcar repeat units follow at residues glutamate 112–leucine 198, proline 206–alanine 288, and leucine 298–threonine 392. Helical transmembrane passes span isoleucine 115 to leucine 135, isoleucine 167 to valine 187, valine 208 to proline 228, alanine 262 to phenylalanine 282, serine 303 to valine 323, and threonine 365 to alanine 385.

This sequence belongs to the mitochondrial carrier (TC 2.A.29) family. As to expression, expressed in leaves, developing flowers and siliques.

The protein localises to the plastid. Its subcellular location is the chloroplast inner membrane. In terms of biological role, probably involved in iron transport into chloroplasts. The sequence is that of Protein MITOFERRINLIKE 1, chloroplastic (MFL1) from Arabidopsis thaliana (Mouse-ear cress).